Reading from the N-terminus, the 376-residue chain is MKSKQIIAFYVITTNYHHNKKTYKIGIHTGTLEDLISRYMTYFPDLIVKYFQYTVIAREVETNLKKNLRKHRVVNIKGGRSEWINMEYEKLYAHIKCEINSDKNIIINDVTNMELVNKYTKELLINKLSRTIYQTIFDIEICKPELLAGIDESKYNLDELLTKQTLSETKSLALKKMLFMKTFGITDSSHQEEFIEFYNEYASKIVIIRRFERFFSYDKQYNEIDYNLNHHNDGKDKLRDKIILEFINFILGKNKTNYKSDSLSYILSQDEHNTAVLTVAEQSMYFANEDKFRPLFNKNKGKFKEINEFNFKHYFETVQAILRSYGIDYCRGKRKRINGGREFEYSLSVNKQIRDIIDFKYGLSDSVNDFPNLFHK.

This sequence belongs to the mimivirus R1 family.

This is an uncharacterized protein from Acanthamoeba polyphaga (Amoeba).